Consider the following 585-residue polypeptide: Probable long-chain-fatty-acid--AMP ligase FadD30 (585 aa).

Belongs to the ATP-dependent AMP-binding enzyme family.

It participates in lipid metabolism; fatty acid biosynthesis. Catalyzes the activation of long-chain fatty acids as acyl-adenylates (acyl-AMP), which are then transferred to a multifunctional polyketide synthase (PKS) for further chain extension. In Mycobacterium tuberculosis (strain CDC 1551 / Oshkosh), this protein is Probable long-chain-fatty-acid--AMP ligase FadD30 (fadD30).